We begin with the raw amino-acid sequence, 181 residues long: Crossover junction endodeoxyribonuclease RuvC (181 aa).

Catalysis depends on residues Asp-7, Glu-67, and Asp-139. Residues Asp-7, Glu-67, and Asp-139 each contribute to the Mg(2+) site.

The protein belongs to the RuvC family. As to quaternary structure, homodimer which binds Holliday junction (HJ) DNA. The HJ becomes 2-fold symmetrical on binding to RuvC with unstacked arms; it has a different conformation from HJ DNA in complex with RuvA. In the full resolvosome a probable DNA-RuvA(4)-RuvB(12)-RuvC(2) complex forms which resolves the HJ. The cofactor is Mg(2+).

It is found in the cytoplasm. It catalyses the reaction Endonucleolytic cleavage at a junction such as a reciprocal single-stranded crossover between two homologous DNA duplexes (Holliday junction).. The RuvA-RuvB-RuvC complex processes Holliday junction (HJ) DNA during genetic recombination and DNA repair. Endonuclease that resolves HJ intermediates. Cleaves cruciform DNA by making single-stranded nicks across the HJ at symmetrical positions within the homologous arms, yielding a 5'-phosphate and a 3'-hydroxyl group; requires a central core of homology in the junction. The consensus cleavage sequence is 5'-(A/T)TT(C/G)-3'. Cleavage occurs on the 3'-side of the TT dinucleotide at the point of strand exchange. HJ branch migration catalyzed by RuvA-RuvB allows RuvC to scan DNA until it finds its consensus sequence, where it cleaves and resolves the cruciform DNA. The polypeptide is Crossover junction endodeoxyribonuclease RuvC (Ralstonia nicotianae (strain ATCC BAA-1114 / GMI1000) (Ralstonia solanacearum)).